The primary structure comprises 488 residues: Bifunctional pantoate ligase/cytidylate kinase (488 aa).

1–8 (MGALHRAH) provides a ligand contact to ATP. The segment at 1 to 251 (MGALHRAHGQ…CGETRLIDHT (251 aa)) is pantoate--beta-alanine ligase. The Proton donor role is filled by H8. Q36 contributes to the (R)-pantoate binding site. Beta-alanine is bound at residue Q36. 125-128 (GEKD) contributes to the ATP binding site. (R)-pantoate is bound at residue Q131. Residues V154 and 162–165 (CSSR) contribute to the ATP site. Residues 252 to 488 (FLMSRQPIVA…PEEVWPTPGS (237 aa)) form a cytidylate kinase region.

In the N-terminal section; belongs to the pantothenate synthetase family. It in the C-terminal section; belongs to the cytidylate kinase family. Type 1 subfamily.

The protein localises to the cytoplasm. The catalysed reaction is (R)-pantoate + beta-alanine + ATP = (R)-pantothenate + AMP + diphosphate + H(+). The enzyme catalyses CMP + ATP = CDP + ADP. It catalyses the reaction dCMP + ATP = dCDP + ADP. It participates in cofactor biosynthesis; (R)-pantothenate biosynthesis; (R)-pantothenate from (R)-pantoate and beta-alanine: step 1/1. In terms of biological role, catalyzes the condensation of pantoate with beta-alanine in an ATP-dependent reaction via a pantoyl-adenylate intermediate. Functionally, catalyzes the transfer of a phosphate group from ATP to either CMP or dCMP to form CDP or dCDP and ADP, respectively. This Prochlorococcus marinus (strain MIT 9303) protein is Bifunctional pantoate ligase/cytidylate kinase.